Consider the following 980-residue polypeptide: Alanine--tRNA ligase, mitochondrial (980 aa).

The transit peptide at 1–23 (MAVALAAAAGKLRRAIGRSCPWQ) directs the protein to the mitochondrion. ATP-binding positions include R105, H123, W205, and 235 to 237 (LWN). L-alanine is bound by residues N237 and D260. Residue G264 coordinates ATP. H627, H631, C744, and H748 together coordinate Zn(2+).

Belongs to the class-II aminoacyl-tRNA synthetase family. Monomer. It depends on Zn(2+) as a cofactor.

The protein localises to the mitochondrion. The catalysed reaction is tRNA(Ala) + L-alanine + ATP = L-alanyl-tRNA(Ala) + AMP + diphosphate. The enzyme catalyses (S)-lactate + ATP + H(+) = (S)-lactoyl-AMP + diphosphate. It carries out the reaction (S)-lactoyl-AMP + L-lysyl-[protein] = N(6)-[(S)-lactoyl]-L-lysyl-[protein] + AMP + 2 H(+). In terms of biological role, catalyzes the attachment of alanine to tRNA(Ala) in a two-step reaction: alanine is first activated by ATP to form Ala-AMP and then transferred to the acceptor end of tRNA(Ala). Also edits incorrectly charged tRNA(Ala) via its editing domain. In presence of high levels of lactate, also acts as a protein lactyltransferase that mediates lactylation of lysine residues in target proteins, such as CGAS. Acts as an inhibitor of cGAS/STING signaling by catalyzing lactylation of CGAS, preventing the formation of liquid-like droplets in which CGAS is activated. In Mus musculus (Mouse), this protein is Alanine--tRNA ligase, mitochondrial (Aars2).